We begin with the raw amino-acid sequence, 226 residues long: 7-cyano-7-deazaguanine synthase (226 aa).

8-18 contributes to the ATP binding site; it reads ISGGLDSTTCL. 4 residues coordinate Zn(2+): Cys188, Cys198, Cys201, and Cys204.

This sequence belongs to the QueC family. Zn(2+) serves as cofactor.

It carries out the reaction 7-carboxy-7-deazaguanine + NH4(+) + ATP = 7-cyano-7-deazaguanine + ADP + phosphate + H2O + H(+). It participates in purine metabolism; 7-cyano-7-deazaguanine biosynthesis. In terms of biological role, catalyzes the ATP-dependent conversion of 7-carboxy-7-deazaguanine (CDG) to 7-cyano-7-deazaguanine (preQ(0)). In Coxiella burnetii (strain RSA 331 / Henzerling II), this protein is 7-cyano-7-deazaguanine synthase.